A 95-amino-acid polypeptide reads, in one-letter code: Hiracin-JM79 immunity factor (95 aa).

Functionally, imparts immunity to bacteriocin hiracin-JM79 to naturally sensitive host strains. The protein is Hiracin-JM79 immunity factor of Enterococcus hirae.